The sequence spans 97 residues: Protein RnfH (97 aa).

The protein belongs to the UPF0125 (RnfH) family.

This is Protein RnfH from Halorhodospira halophila (strain DSM 244 / SL1) (Ectothiorhodospira halophila (strain DSM 244 / SL1)).